The chain runs to 764 residues: G-type lectin S-receptor-like serine/threonine-protein kinase SD3-1 (764 aa).

An N-terminal signal peptide occupies residues 1-24 (MKMLRALLLCLSLVFFLAFQIVVS). Bulb-type lectin domains follow at residues 25–151 (EIQL…QSFG) and 154–279 (TDTL…WKPV). Topologically, residues 25–442 (EIQLGSKLVV…TKSHSICIPC (418 aa)) are extracellular. N-linked (GlcNAc...) asparagine glycans are attached at residues Asn-92, Asn-198, and Asn-248. The region spanning 283–320 (VENQCRVFATCGSQVCSFNSSGYTECNCPFNAFVSVSD) is the EGF-like; atypical domain. Cystine bridges form between Cys-287-Cys-298, Cys-293-Cys-308, Cys-332-Cys-413, Cys-365-Cys-388, and Cys-369-Cys-375. N-linked (GlcNAc...) asparagine glycans are attached at residues Asn-301 and Asn-353. The 82-residue stretch at 332–413 (CKSGFNMVKF…LSSISYVKTC (82 aa)) folds into the Apple domain. Asn-423 is a glycosylation site (N-linked (GlcNAc...) asparagine). A helical transmembrane segment spans residues 443–463 (LVGATSTTLVLFLGFQLGIVV). At 464 to 764 (YIYRRKKKLA…SESSQSLYEP (301 aa)) the chain is on the cytoplasmic side. In terms of domain architecture, Protein kinase spans 466–764 (YRRKKKLAKK…SESSQSLYEP (299 aa)). ATP is bound by residues 508-516 (IGPQIFKGV) and Lys-526. The interval 586–603 (LRSKKLTWRIRTDTCLSV) is caM-binding. Residues 738–764 (DPPPPPFACARSSPTNSSESSQSLYEP) form a disordered region. Residues 749–764 (SSPTNSSESSQSLYEP) are compositionally biased toward low complexity.

The protein localises to the cell membrane. The enzyme catalyses L-seryl-[protein] + ATP = O-phospho-L-seryl-[protein] + ADP + H(+). It carries out the reaction L-threonyl-[protein] + ATP = O-phospho-L-threonyl-[protein] + ADP + H(+). The protein is G-type lectin S-receptor-like serine/threonine-protein kinase SD3-1 (SD31) of Arabidopsis thaliana (Mouse-ear cress).